We begin with the raw amino-acid sequence, 191 residues long: MSTKNRDRLVVTEDSDDDNEREEMSSGGESGEEGPSSVDGGAGDADETVAFPAIERRKKKVIKKLTKKEQSLKKSVKEYRIKLALVKPDITTDREKERNLRRVATKGVVQLFNAVSDRQKTMSDAVKEKMTARERREARQRFDGKNFDSDRFADSGYVGAKKEVKGEDDDGEDQMDIGEEQIDTGNYSDED.

Basic and acidic residues predominate over residues 1-11; that stretch reads MSTKNRDRLVV. Positions 1–52 are disordered; that stretch reads MSTKNRDRLVVTEDSDDDNEREEMSSGGESGEEGPSSVDGGAGDADETVAFP. A coiled-coil region spans residues 53–84; the sequence is AIERRKKKVIKKLTKKEQSLKKSVKEYRIKLA. The segment covering 119-153 has biased composition (basic and acidic residues); it reads QKTMSDAVKEKMTARERREARQRFDGKNFDSDRFA. The tract at residues 119–191 is disordered; it reads QKTMSDAVKE…IDTGNYSDED (73 aa). Residues 166-191 show a composition bias toward acidic residues; it reads GEDDDGEDQMDIGEEQIDTGNYSDED.

This sequence belongs to the RRP15 family.

The polypeptide is RRP15-like protein (Caenorhabditis elegans).